The primary structure comprises 111 residues: DNA-directed RNA polymerase subunit Rpo11 (111 aa).

The protein belongs to the archaeal Rpo11/eukaryotic RPB11/RPC19 RNA polymerase subunit family. Part of the RNA polymerase complex.

The protein resides in the cytoplasm. It catalyses the reaction RNA(n) + a ribonucleoside 5'-triphosphate = RNA(n+1) + diphosphate. DNA-dependent RNA polymerase (RNAP) catalyzes the transcription of DNA into RNA using the four ribonucleoside triphosphates as substrates. This chain is DNA-directed RNA polymerase subunit Rpo11, found in Thermoplasma acidophilum (strain ATCC 25905 / DSM 1728 / JCM 9062 / NBRC 15155 / AMRC-C165).